A 1132-amino-acid polypeptide reads, in one-letter code: Tyrosine-protein kinase JAK2 (1132 aa).

The tract at residues 1–239 is interaction with cytokine/interferon/growth hormone receptors; the sequence is MGMACLTMTE…RYRFRRFIQQ (239 aa). One can recognise an FERM domain in the interval 37-380; that stretch reads PVLQVYLYHS…GYYRLTADAH (344 aa). A Phosphotyrosine; by autocatalysis modification is found at tyrosine 119. Tyrosine 372 and tyrosine 373 each carry phosphotyrosine. In terms of domain architecture, SH2; atypical spans 401–482; that stretch reads HGPISMDFAI…NLKDLLNCYQ (82 aa). Phosphoserine is present on serine 523. One can recognise a Protein kinase 1 domain in the interval 545 to 809; it reads LIFNESLGQG…AVIRDLNSLF (265 aa). Tyrosine 570 and tyrosine 813 each carry phosphotyrosine. The Protein kinase 2 domain maps to 849–1124; the sequence is LKFLQQLGKG…SFRDLSLRVD (276 aa). 855-863 contributes to the ATP binding site; it reads LGKGNFGSV. Tyrosine 868 carries the post-translational modification Phosphotyrosine; by autocatalysis. Lysine 882 serves as a coordination point for ATP. A phosphotyrosine; by autocatalysis mark is found at tyrosine 966 and tyrosine 972. Aspartate 976 serves as the catalytic Proton acceptor. 2 positions are modified to phosphotyrosine; by autocatalysis: tyrosine 1007 and tyrosine 1008.

This sequence belongs to the protein kinase superfamily. Tyr protein kinase family. JAK subfamily. In terms of assembly, interacts with IL23R, SKB1 and STAM2. Interacts with EPOR. Interacts with LYN. Interacts with SIRPA. Interacts with SH2B1. Interacts with TEC. Interacts with IFNGR2 (via intracellular domain). Interacts with LEPR (Isoform B). Interacts with HSP90AB1; promotes functional activation in a heat shock-dependent manner. Interacts with STRA6. Interacts with ASB2; the interaction targets JAK2 for Notch-induced proteasomal degradation. Interacts with MPL/TPOR. Requires Mg(2+) as cofactor. Post-translationally, autophosphorylated, leading to regulate its activity. Leptin promotes phosphorylation on tyrosine residues, including phosphorylation on Tyr-813. Autophosphorylation on Tyr-119 in response to EPO down-regulates its kinase activity. Autophosphorylation on Tyr-868, Tyr-966 and Tyr-972 in response to growth hormone (GH) are required for maximal kinase activity. Also phosphorylated by TEC. Phosphorylated on tyrosine residues in response to interferon gamma signaling. Phosphorylated on tyrosine residues in response to a signaling cascade that is activated by increased cellular retinol. In terms of processing, undergoes Notch-induced ubiquitination and subsequent proteasomal degradation which is mediated by ASB1 or ASB2, the substrate-recognition components of probable ECS E3 ubiquitin-protein ligase complexes. As to expression, ubiquitously expressed throughout most tissues.

It is found in the endomembrane system. The protein localises to the cytoplasm. The protein resides in the nucleus. The catalysed reaction is L-tyrosyl-[protein] + ATP = O-phospho-L-tyrosyl-[protein] + ADP + H(+). Regulated by autophosphorylation, can both activate or decrease activity. Heme regulates its activity by enhancing the phosphorylation on Tyr-1007 and Tyr-1008. Functionally, non-receptor tyrosine kinase involved in various processes such as cell growth, development, differentiation or histone modifications. Mediates essential signaling events in both innate and adaptive immunity. In the cytoplasm, plays a pivotal role in signal transduction via its association with type I receptors such as growth hormone (GHR), prolactin (PRLR), leptin (LEPR), erythropoietin (EPOR), thrombopoietin receptor (MPL/TPOR); or type II receptors including IFN-alpha, IFN-beta, IFN-gamma and multiple interleukins. Following ligand-binding to cell surface receptors, phosphorylates specific tyrosine residues on the cytoplasmic tails of the receptor, creating docking sites for STATs proteins. Subsequently, phosphorylates the STATs proteins once they are recruited to the receptor. Phosphorylated STATs then form homodimer or heterodimers and translocate to the nucleus to activate gene transcription. For example, cell stimulation with erythropoietin (EPO) during erythropoiesis leads to JAK2 autophosphorylation, activation, and its association with erythropoietin receptor (EPOR) that becomes phosphorylated in its cytoplasmic domain. Then, STAT5 (STAT5A or STAT5B) is recruited, phosphorylated and activated by JAK2. Once activated, dimerized STAT5 translocates into the nucleus and promotes the transcription of several essential genes involved in the modulation of erythropoiesis. Part of a signaling cascade that is activated by increased cellular retinol and that leads to the activation of STAT5 (STAT5A or STAT5B). In addition, JAK2 mediates angiotensin-2-induced ARHGEF1 phosphorylation. Plays a role in cell cycle by phosphorylating CDKN1B. Cooperates with TEC through reciprocal phosphorylation to mediate cytokine-driven activation of FOS transcription. In the nucleus, plays a key role in chromatin by specifically mediating phosphorylation of 'Tyr-41' of histone H3 (H3Y41ph), a specific tag that promotes exclusion of CBX5 (HP1 alpha) from chromatin. Up-regulates the potassium voltage-gated channel activity of KCNA3. The sequence is that of Tyrosine-protein kinase JAK2 from Mus musculus (Mouse).